A 946-amino-acid chain; its full sequence is RIPOR family member 3 (946 aa).

Phosphoserine is present on residues Ser9, Ser24, and Ser340. Phosphothreonine is present on Thr345. Residues Ser351 and Ser384 each carry the phosphoserine modification. The tract at residues 390-512 (GPSLRSQSQE…GDREDGPGVA (123 aa)) is disordered. The segment covering 437-446 (SIEEEAREDP) has biased composition (basic and acidic residues). Residues 478-495 (SLPQGSLFHSGTASSSQN) are compositionally biased toward polar residues. The segment covering 496 to 508 (GHEEGATGDREDG) has biased composition (basic and acidic residues).

The protein belongs to the RIPOR family.

This is RIPOR family member 3 from Homo sapiens (Human).